A 303-amino-acid chain; its full sequence is Mycothiol acetyltransferase (303 aa).

Position 33 (aspartate 33) interacts with 1D-myo-inositol 2-(L-cysteinylamino)-2-deoxy-alpha-D-glucopyranoside. Residues 78–80 and 86–91 contribute to the acetyl-CoA site; these read VVV and RRGTGS. The 154-residue stretch at 150 to 303 folds into the N-acetyltransferase domain; the sequence is VRFATYSGPH…AYAAVAPTDV (154 aa). Residues glutamate 177, lysine 218, and glutamate 226 each contribute to the 1D-myo-inositol 2-(L-cysteinylamino)-2-deoxy-alpha-D-glucopyranoside site. 230–232 contacts acetyl-CoA; that stretch reads VGV. Tyrosine 269 is a binding site for 1D-myo-inositol 2-(L-cysteinylamino)-2-deoxy-alpha-D-glucopyranoside. 274 to 279 contacts acetyl-CoA; the sequence is NTAAVK.

The protein belongs to the acetyltransferase family. MshD subfamily. Monomer.

The enzyme catalyses 1D-myo-inositol 2-(L-cysteinylamino)-2-deoxy-alpha-D-glucopyranoside + acetyl-CoA = mycothiol + CoA + H(+). Its function is as follows. Catalyzes the transfer of acetyl from acetyl-CoA to desacetylmycothiol (Cys-GlcN-Ins) to form mycothiol. This chain is Mycothiol acetyltransferase, found in Mycolicibacterium gilvum (strain PYR-GCK) (Mycobacterium gilvum (strain PYR-GCK)).